The following is a 673-amino-acid chain: NACHT, LRR and PYD domains-containing protein 10 (673 aa).

Residues 1 to 92 (MALARANSPQ…VDYLNQVCLN (92 aa)) enclose the Pyrin domain. The NACHT domain occupies 163 to 469 (PIVVMQGSAG…AMSFLVKEDQ (307 aa)). Residue 169-176 (GSAGTGKT) coordinates ATP. The segment at 578-673 (SDKKKSVSVT…DGEMIDKMNG (96 aa)) is disordered. A compositionally biased stretch (low complexity) spans 584–597 (VSVTSSFSSGKVQS). Basic and acidic residues predominate over residues 633-648 (ASREKGHMEMNDKEDG). Residues 649-658 (GVEEQEDEEG) show a composition bias toward acidic residues. Residues 659-673 (QTLKKDGEMIDKMNG) show a composition bias toward basic and acidic residues.

The protein belongs to the NLRP family. Oligomerizes. Interacts with PYCARD. Also interacts with CASP1 and IL1B. Interacts with NOD1 and components of the NOD1 signaling pathway including RIPK2, NR2C2/TAK1 and IKBKG/NEMO. Expressed in skin, tongue, heart, colon and several cell lines of hematopoietic and myocytic origin but not in kidney, skeletal muscle, spleen, liver, lung, thymus, brain or small intestine (at protein level).

It is found in the cytoplasm. The protein resides in the cell membrane. In terms of biological role, inhibits autoprocessing of CASP1, CASP1-dependent IL1B secretion, PYCARD aggregation and PYCARD-mediated apoptosis but not apoptosis induced by FAS or BID. Displays anti-inflammatory activity. Required for immunity against C.albicans infection. Involved in the innate immune response by contributing to pro-inflammatory cytokine release in response to invasive bacterial infection. Contributes to T-cell-mediated inflammatory responses in the skin. Plays a role in protection against periodontitis through its involvement in induction of IL1A via ERK activation in oral epithelial cells infected with periodontal pathogens. Exhibits both ATPase and GTPase activities. In Mus musculus (Mouse), this protein is NACHT, LRR and PYD domains-containing protein 10 (Nlrp10).